Here is a 190-residue protein sequence, read N- to C-terminus: ATP synthase subunit b (190 aa).

The chain crosses the membrane as a helical span at residues 24–44 (IVGSLICFVVILFFFWKLVLP).

It belongs to the ATPase B chain family. F-type ATPases have 2 components, F(1) - the catalytic core - and F(0) - the membrane proton channel. F(1) has five subunits: alpha(3), beta(3), gamma(1), delta(1), epsilon(1). F(0) has three main subunits: a(1), b(2) and c(10-14). The alpha and beta chains form an alternating ring which encloses part of the gamma chain. F(1) is attached to F(0) by a central stalk formed by the gamma and epsilon chains, while a peripheral stalk is formed by the delta and b chains.

The protein localises to the cell membrane. Its function is as follows. F(1)F(0) ATP synthase produces ATP from ADP in the presence of a proton or sodium gradient. F-type ATPases consist of two structural domains, F(1) containing the extramembraneous catalytic core and F(0) containing the membrane proton channel, linked together by a central stalk and a peripheral stalk. During catalysis, ATP synthesis in the catalytic domain of F(1) is coupled via a rotary mechanism of the central stalk subunits to proton translocation. Component of the F(0) channel, it forms part of the peripheral stalk, linking F(1) to F(0). In Leifsonia xyli subsp. xyli (strain CTCB07), this protein is ATP synthase subunit b.